We begin with the raw amino-acid sequence, 254 residues long: Major prion protein (254 aa).

The N-terminal stretch at 1 to 22 (MANLSYWLLALFVATWTDVGLC) is a signal peptide. Residues 23 to 231 (KKRPKPGGWN…SQAYYDGRRS (209 aa)) form an interaction with GRB2, ERI3 and SYN1 region. Residues 25–104 (RPKPGGWNTG…THNQWNKPSK (80 aa)) are disordered. 5 tandem repeats follow at residues 51–59 (PQGGGTWGQ), 60–67 (PHGGGWGQ), 68–75 (PHGGGWGQ), 76–83 (PHGGGWGQ), and 84–91 (PHGGGWGQ). Positions 51–91 (PQGGGTWGQPHGGGWGQPHGGGWGQPHGGGWGQPHGGGWGQ) are 5 X 8 AA tandem repeats of P-H-G-G-G-W-G-Q. Gly residues predominate over residues 52–95 (QGGGTWGQPHGGGWGQPHGGGWGQPHGGGWGQPHGGGWGQGGGT). Cu(2+) contacts are provided by His-61, Gly-62, Gly-63, His-69, Gly-70, Gly-71, His-77, Gly-78, Gly-79, His-85, Gly-86, and Gly-87. A prP27-30 (protease resistant core) region spans residues 90 to 231 (GQGGGTHNQW…SQAYYDGRRS (142 aa)). Cys-179 and Cys-214 are joined by a disulfide. Asn-181 and Asn-197 each carry an N-linked (GlcNAc...) asparagine glycan. A lipid anchor (GPI-anchor amidated serine) is attached at Ser-231. Residues 232-254 (SAVLFSSPPVILLISFLIFLIVG) constitute a propeptide, removed in mature form.

This sequence belongs to the prion family. As to quaternary structure, monomer and homodimer. Has a tendency to aggregate into amyloid fibrils containing a cross-beta spine, formed by a steric zipper of superposed beta-strands. Soluble oligomers may represent an intermediate stage on the path to fibril formation. Copper binding may promote oligomerization. Interacts with GRB2, APP, ERI3/PRNPIP and SYN1. Mislocalized cytosolically exposed PrP interacts with MGRN1; this interaction alters MGRN1 subcellular location and causes lysosomal enlargement. Interacts with KIAA1191.

Its subcellular location is the cell membrane. It localises to the golgi apparatus. Its function is as follows. Its primary physiological function is unclear. Has cytoprotective activity against internal or environmental stresses. May play a role in neuronal development and synaptic plasticity. May be required for neuronal myelin sheath maintenance. May play a role in iron uptake and iron homeostasis. Soluble oligomers are toxic to cultured neuroblastoma cells and induce apoptosis (in vitro). Association with GPC1 (via its heparan sulfate chains) targets PRNP to lipid rafts. Also provides Cu(2+) or Zn(2+) for the ascorbate-mediated GPC1 deaminase degradation of its heparan sulfate side chains. The protein is Major prion protein (PRNP) of Cricetulus griseus (Chinese hamster).